The chain runs to 431 residues: Levansucrase LscC (431 aa).

Residues Trp61, Asp62, Ala148, Arg218, and Asp219 each contribute to the sucrose site. Asp62 serves as the catalytic Nucleophile. The active-site Proton donor/acceptor is the Glu303.

It belongs to the glycosyl hydrolase 68 family.

The protein localises to the periplasm. The catalysed reaction is [6)-beta-D-fructofuranosyl-(2-&gt;](n) alpha-D-glucopyranoside + sucrose = [6)-beta-D-fructofuranosyl-(2-&gt;](n+1) alpha-D-glucopyranoside + D-glucose. In terms of biological role, catalyzes the synthesis of levan, a fructose polymer, by transferring the fructosyl moiety from sucrose to a growing acceptor molecule. In Pseudomonas savastanoi pv. glycinea (Pseudomonas syringae pv. glycinea), this protein is Levansucrase LscC.